A 197-amino-acid polypeptide reads, in one-letter code: Ribonuclease HII (197 aa).

Positions 9-197 (KLIAGVDEVG…APVKKALEQF (189 aa)) constitute an RNase H type-2 domain. A divalent metal cation-binding residues include aspartate 15, glutamate 16, and aspartate 107.

Belongs to the RNase HII family. Requires Mn(2+) as cofactor. It depends on Mg(2+) as a cofactor.

The protein localises to the cytoplasm. The catalysed reaction is Endonucleolytic cleavage to 5'-phosphomonoester.. In terms of biological role, endonuclease that specifically degrades the RNA of RNA-DNA hybrids. The sequence is that of Ribonuclease HII (rnhB) from Haemophilus influenzae (strain ATCC 51907 / DSM 11121 / KW20 / Rd).